The chain runs to 130 residues: Large ribosomal subunit protein bL17 (130 aa).

It belongs to the bacterial ribosomal protein bL17 family. As to quaternary structure, part of the 50S ribosomal subunit. Contacts protein L32.

This chain is Large ribosomal subunit protein bL17, found in Buchnera aphidicola subsp. Acyrthosiphon pisum (strain 5A).